Here is a 278-residue protein sequence, read N- to C-terminus: DNA repair protein RecO (278 aa).

The segment covering 1-12 (MGTNDALTSTED) has biased composition (polar residues). The disordered stretch occupies residues 1 to 41 (MGTNDALTSTEDAVTAGANDAPLPAPPEPPRKARRATSRTS).

Belongs to the RecO family.

Its function is as follows. Involved in DNA repair and RecF pathway recombination. The sequence is that of DNA repair protein RecO from Burkholderia orbicola (strain AU 1054).